The chain runs to 371 residues: RxLR effector protein PITG_12731 (371 aa).

The N-terminal stretch at 1–24 (MRFYSVLLTIVTLIASTYDAKVNA) is a signal peptide. A RxLR-dEER motif is present at residues 43–53 (RMLRADHADER).

The protein belongs to the RxLR effector family.

The protein localises to the secreted. It is found in the host nucleus. It localises to the host cytoplasm. In terms of biological role, effector that enhances P.infestans colonization of Nicotiana benthamiana leaves. The chain is RxLR effector protein PITG_12731 from Phytophthora infestans (strain T30-4) (Potato late blight agent).